We begin with the raw amino-acid sequence, 397 residues long: ATP-dependent RNA helicase eIF4A (397 aa).

Residues 23-51 carry the Q motif motif; sequence YKFDDLNLKPNIVRGIFGYGYETPSAIQQ. Residues 54–224 enclose the Helicase ATP-binding domain; sequence ILPITEGRDV…TKFMNNPVRI (171 aa). Residue 67–74 participates in ATP binding; it reads AQSGTGKT. The DEAD box signature appears at 172–175; it reads DEAD. Residues 255–396 form the Helicase C-terminal domain; the sequence is DLYDSISVTQ…EMPADIGSLF (142 aa).

The protein belongs to the DEAD box helicase family. eIF4A subfamily. In terms of assembly, component of the eIF4F complex, which composition varies with external and internal environmental conditions. It is composed of at least eIF4A, eIF4E and eIF4G.

It is found in the cytoplasm. It carries out the reaction ATP + H2O = ADP + phosphate + H(+). Its function is as follows. ATP-dependent RNA helicase which is a subunit of the eIF4F complex involved in cap recognition and is required for mRNA binding to ribosome. In the current model of translation initiation, eIF4A unwinds RNA secondary structures in the 5'-UTR of mRNAs which is necessary to allow efficient binding of the small ribosomal subunit, and subsequent scanning for the initiator codon. This is ATP-dependent RNA helicase eIF4A (TIF1) from Lodderomyces elongisporus (strain ATCC 11503 / CBS 2605 / JCM 1781 / NBRC 1676 / NRRL YB-4239) (Yeast).